A 601-amino-acid polypeptide reads, in one-letter code: tRNA 5-methylaminomethyl-2-thiouridine biosynthesis bifunctional protein MnmC (601 aa).

Residues 1–237 (MSDPTASPLI…KKQRLEAVAP (237 aa)) are tRNA (mnm(5)s(2)U34)-methyltransferase. The FAD-dependent cmnm(5)s(2)U34 oxidoreductase stretch occupies residues 252-601 (IGGGIAGAAM…FSSRVATGAV (350 aa)).

This sequence in the N-terminal section; belongs to the methyltransferase superfamily. tRNA (mnm(5)s(2)U34)-methyltransferase family. The protein in the C-terminal section; belongs to the DAO family. It depends on FAD as a cofactor.

It localises to the cytoplasm. The catalysed reaction is 5-aminomethyl-2-thiouridine(34) in tRNA + S-adenosyl-L-methionine = 5-methylaminomethyl-2-thiouridine(34) in tRNA + S-adenosyl-L-homocysteine + H(+). Its function is as follows. Catalyzes the last two steps in the biosynthesis of 5-methylaminomethyl-2-thiouridine (mnm(5)s(2)U) at the wobble position (U34) in tRNA. Catalyzes the FAD-dependent demodification of cmnm(5)s(2)U34 to nm(5)s(2)U34, followed by the transfer of a methyl group from S-adenosyl-L-methionine to nm(5)s(2)U34, to form mnm(5)s(2)U34. In Caulobacter sp. (strain K31), this protein is tRNA 5-methylaminomethyl-2-thiouridine biosynthesis bifunctional protein MnmC.